The sequence spans 152 residues: MSDVQERLKKLGASARIGIGKGTPRRKVKRAPARSAGDDKKLQATLKKVNVQPIQAIEEVNMFKSDGNVIHFAAPKVHAAVPANTFAIYGNGEDKELTELVPGILNQLGPDSLASLRKLAESYQNMQKNEKDAEEDDIPDLVAGENFESKVE.

Disordered stretches follow at residues 19 to 39 (IGKG…AGDD) and 125 to 152 (NMQK…SKVE). Basic residues predominate over residues 23 to 32 (TPRRKVKRAP). Positions 36 to 101 (AGDDKKLQAT…GEDKELTELV (66 aa)) constitute an NAC-A/B domain.

The protein belongs to the NAC-beta family. As to quaternary structure, part of the nascent polypeptide-associated complex (NAC), consisting of npc-1/egd2 and npc-2/egd1. NAC associates with ribosomes via npc-2/egd1.

The protein localises to the cytoplasm. Its subcellular location is the nucleus. Functionally, component of the nascent polypeptide-associated complex (NAC), a dynamic component of the ribosomal exit tunnel, protecting the emerging polypeptides from interaction with other cytoplasmic proteins to ensure appropriate nascent protein targeting. The NAC complex also promotes mitochondrial protein import by enhancing productive ribosome interactions with the outer mitochondrial membrane and blocks the inappropriate interaction of ribosomes translating non-secretory nascent polypeptides with translocation sites in the membrane of the endoplasmic reticulum. Npc-2/egd1 may act as a transcription factor that exert a negative effect on the expression of several genes that are transcribed by RNA polymerase II. The sequence is that of Nascent polypeptide-associated complex subunit beta (npc-2) from Neurospora crassa (strain ATCC 24698 / 74-OR23-1A / CBS 708.71 / DSM 1257 / FGSC 987).